Here is a 285-residue protein sequence, read N- to C-terminus: Nucleotide-binding protein PFL_0912 (285 aa).

An ATP-binding site is contributed by 8-15 (GRSGSGKS). 60 to 63 (DARN) provides a ligand contact to GTP.

The protein belongs to the RapZ-like family.

Functionally, displays ATPase and GTPase activities. The protein is Nucleotide-binding protein PFL_0912 of Pseudomonas fluorescens (strain ATCC BAA-477 / NRRL B-23932 / Pf-5).